A 374-amino-acid chain; its full sequence is UDP-N-acetylglucosamine--N-acetylmuramyl-(pentapeptide) pyrophosphoryl-undecaprenol N-acetylglucosamine transferase (374 aa).

UDP-N-acetyl-alpha-D-glucosamine-binding positions include 13-15, Asn124, Arg165, Ser193, and Gln294; that span reads TGG.

The protein belongs to the glycosyltransferase 28 family. MurG subfamily.

The protein localises to the cell inner membrane. The catalysed reaction is di-trans,octa-cis-undecaprenyl diphospho-N-acetyl-alpha-D-muramoyl-L-alanyl-D-glutamyl-meso-2,6-diaminopimeloyl-D-alanyl-D-alanine + UDP-N-acetyl-alpha-D-glucosamine = di-trans,octa-cis-undecaprenyl diphospho-[N-acetyl-alpha-D-glucosaminyl-(1-&gt;4)]-N-acetyl-alpha-D-muramoyl-L-alanyl-D-glutamyl-meso-2,6-diaminopimeloyl-D-alanyl-D-alanine + UDP + H(+). It participates in cell wall biogenesis; peptidoglycan biosynthesis. Functionally, cell wall formation. Catalyzes the transfer of a GlcNAc subunit on undecaprenyl-pyrophosphoryl-MurNAc-pentapeptide (lipid intermediate I) to form undecaprenyl-pyrophosphoryl-MurNAc-(pentapeptide)GlcNAc (lipid intermediate II). The chain is UDP-N-acetylglucosamine--N-acetylmuramyl-(pentapeptide) pyrophosphoryl-undecaprenol N-acetylglucosamine transferase from Rhizobium rhizogenes (strain K84 / ATCC BAA-868) (Agrobacterium radiobacter).